We begin with the raw amino-acid sequence, 184 residues long: RNA 2',3'-cyclic phosphodiesterase (184 aa).

His-40 (proton donor) is an active-site residue. 2 consecutive short sequence motifs (HXTX) follow at residues 40–43 and 125–128; these read HITL. The Proton acceptor role is filled by His-125.

Belongs to the 2H phosphoesterase superfamily. ThpR family.

The catalysed reaction is a 3'-end 2',3'-cyclophospho-ribonucleotide-RNA + H2O = a 3'-end 2'-phospho-ribonucleotide-RNA + H(+). Its function is as follows. Hydrolyzes RNA 2',3'-cyclic phosphodiester to an RNA 2'-phosphomonoester. In vitro, ligates 5' and 3' half-tRNA molecules with 2',3'-cyclic phosphate and 5'-hydroxyl termini, respectively, to the product containing the 2'-5' phosphodiester linkage. Ligase activity requires GTP, but GTP hydrolysis is not required for the reaction, which is reversible. Ligase activity is weak compared to the phosphodiesterase activity. This Pyrococcus furiosus (strain ATCC 43587 / DSM 3638 / JCM 8422 / Vc1) protein is RNA 2',3'-cyclic phosphodiesterase.